Consider the following 105-residue polypeptide: Small cysteine and glycine repeat-containing protein 10 (105 aa).

The segment at Cys4–Gly41 is 10 X 2 AA repeats of CG.

It belongs to the KRTAP type 28 family.

In terms of biological role, in the hair cortex, hair keratin intermediate filaments are embedded in an interfilamentous matrix, consisting of hair keratin-associated proteins (KRTAP), which are essential for the formation of a rigid and resistant hair shaft through their extensive disulfide bond cross-linking with abundant cysteine residues of hair keratins. The matrix proteins include the high-sulfur and high-glycine-tyrosine keratins. In Homo sapiens (Human), this protein is Small cysteine and glycine repeat-containing protein 10.